A 223-amino-acid chain; its full sequence is uncharacterized protein (223 aa).

This is an uncharacterized protein from Acanthamoeba polyphaga (Amoeba).